Here is a 190-residue protein sequence, read N- to C-terminus: ATP synthase subunit delta (190 aa).

It belongs to the ATPase delta chain family. As to quaternary structure, F-type ATPases have 2 components, F(1) - the catalytic core - and F(0) - the membrane proton channel. F(1) has five subunits: alpha(3), beta(3), gamma(1), delta(1), epsilon(1). F(0) has three main subunits: a(1), b(2) and c(10-14). The alpha and beta chains form an alternating ring which encloses part of the gamma chain. F(1) is attached to F(0) by a central stalk formed by the gamma and epsilon chains, while a peripheral stalk is formed by the delta and b chains.

The protein resides in the cell inner membrane. F(1)F(0) ATP synthase produces ATP from ADP in the presence of a proton or sodium gradient. F-type ATPases consist of two structural domains, F(1) containing the extramembraneous catalytic core and F(0) containing the membrane proton channel, linked together by a central stalk and a peripheral stalk. During catalysis, ATP synthesis in the catalytic domain of F(1) is coupled via a rotary mechanism of the central stalk subunits to proton translocation. In terms of biological role, this protein is part of the stalk that links CF(0) to CF(1). It either transmits conformational changes from CF(0) to CF(1) or is implicated in proton conduction. This Petrotoga mobilis (strain DSM 10674 / SJ95) protein is ATP synthase subunit delta.